The following is a 155-amino-acid chain: Endoribonuclease YbeY (155 aa).

3 residues coordinate Zn(2+): histidine 120, histidine 124, and histidine 130.

It belongs to the endoribonuclease YbeY family. The cofactor is Zn(2+).

It is found in the cytoplasm. Functionally, single strand-specific metallo-endoribonuclease involved in late-stage 70S ribosome quality control and in maturation of the 3' terminus of the 16S rRNA. The sequence is that of Endoribonuclease YbeY from Staphylococcus epidermidis (strain ATCC 35984 / DSM 28319 / BCRC 17069 / CCUG 31568 / BM 3577 / RP62A).